A 324-amino-acid polypeptide reads, in one-letter code: MAELEFEKPVVELRNKIRELKDYTKNSQMDFSEEIRILEEKLENLEEDIYGNLKVWDRVQIARHAERPTTLDYIEHLFTDFFECHGDRLFGDDAAIVGGIAKYKGMPVTVIGHQRGKDTKENIRRNFGMPHPEGYRKALRLMKQAEKFNRPIICFIDTKGAYPGKAAEERGQSEAIARNLFEMAGLTVPVICIVIGEGGSGGALGLGVGDYIHMLENSTYSVITPEGAAAILWKDAGKAKEAAEAMKITAADLKELGVIDEIIPEARGGAHRNILKQSENIDLMIQKTFQQLNGISKDELIEKRYEKYMKIGQVSFSNASIWIK.

Residues 37–291 form the CoA carboxyltransferase C-terminal domain; sequence ILEEKLENLE…DLMIQKTFQQ (255 aa).

It belongs to the AccA family. Acetyl-CoA carboxylase is a heterohexamer composed of biotin carboxyl carrier protein (AccB), biotin carboxylase (AccC) and two subunits each of ACCase subunit alpha (AccA) and ACCase subunit beta (AccD).

It is found in the cytoplasm. It carries out the reaction N(6)-carboxybiotinyl-L-lysyl-[protein] + acetyl-CoA = N(6)-biotinyl-L-lysyl-[protein] + malonyl-CoA. It participates in lipid metabolism; malonyl-CoA biosynthesis; malonyl-CoA from acetyl-CoA: step 1/1. In terms of biological role, component of the acetyl coenzyme A carboxylase (ACC) complex. First, biotin carboxylase catalyzes the carboxylation of biotin on its carrier protein (BCCP) and then the CO(2) group is transferred by the carboxyltransferase to acetyl-CoA to form malonyl-CoA. In Bacillus cereus (strain ATCC 14579 / DSM 31 / CCUG 7414 / JCM 2152 / NBRC 15305 / NCIMB 9373 / NCTC 2599 / NRRL B-3711), this protein is Acetyl-coenzyme A carboxylase carboxyl transferase subunit alpha.